The chain runs to 579 residues: Transcription factor COE2 (579 aa).

An interaction with DNA region spans residues R63–N66. The segment at C149 to C168 adopts a C5-type zinc-finger fold. Interaction with DNA stretches follow at residues N195–N202 and N234–K237. One can recognise an IPT/TIG domain in the interval P260–T343. Disordered stretches follow at residues G442 to N482, A514 to S533, and L549 to M579. Residues G449–N459 show a composition bias toward polar residues. Composition is skewed to low complexity over residues S460–S472 and P521–S533.

It belongs to the COE family.

The protein localises to the nucleus. The chain is Transcription factor COE2 (coe2) from Danio rerio (Zebrafish).